The following is a 364-amino-acid chain: tRNA 2-selenouridine synthase (364 aa).

Positions 14 to 137 (LIADTPIIDV…LRQTAIQATI (124 aa)) constitute a Rhodanese domain. C97 serves as the catalytic S-selanylcysteine intermediate.

Belongs to the SelU family. In terms of assembly, monomer.

It carries out the reaction 5-methylaminomethyl-2-thiouridine(34) in tRNA + selenophosphate + (2E)-geranyl diphosphate + H2O + H(+) = 5-methylaminomethyl-2-selenouridine(34) in tRNA + (2E)-thiogeraniol + phosphate + diphosphate. The enzyme catalyses 5-methylaminomethyl-2-thiouridine(34) in tRNA + (2E)-geranyl diphosphate = 5-methylaminomethyl-S-(2E)-geranyl-thiouridine(34) in tRNA + diphosphate. It catalyses the reaction 5-methylaminomethyl-S-(2E)-geranyl-thiouridine(34) in tRNA + selenophosphate + H(+) = 5-methylaminomethyl-2-(Se-phospho)selenouridine(34) in tRNA + (2E)-thiogeraniol. The catalysed reaction is 5-methylaminomethyl-2-(Se-phospho)selenouridine(34) in tRNA + H2O = 5-methylaminomethyl-2-selenouridine(34) in tRNA + phosphate. Functionally, involved in the post-transcriptional modification of the uridine at the wobble position (U34) of tRNA(Lys), tRNA(Glu) and tRNA(Gln). Catalyzes the conversion of 2-thiouridine (S2U-RNA) to 2-selenouridine (Se2U-RNA). Acts in a two-step process involving geranylation of 2-thiouridine (S2U) to S-geranyl-2-thiouridine (geS2U) and subsequent selenation of the latter derivative to 2-selenouridine (Se2U) in the tRNA chain. The sequence is that of tRNA 2-selenouridine synthase from Shigella flexneri.